The following is a 610-amino-acid chain: Pyruvate decarboxylase 1 (610 aa).

Substrate-binding residues include Asp-72 and His-159. The segment at 437–519 (DSWFNCQKLR…FLINNGGYTI (83 aa)) is thiamine pyrophosphate binding. Asp-487, Asn-514, and Gly-516 together coordinate Mg(2+). Glu-520 provides a ligand contact to substrate.

It belongs to the TPP enzyme family. Homotetramer. The cofactor is a metal cation. Requires thiamine diphosphate as cofactor.

The catalysed reaction is a 2-oxocarboxylate + H(+) = an aldehyde + CO2. This Zea mays (Maize) protein is Pyruvate decarboxylase 1 (PDC1).